The chain runs to 230 residues: Uracil-DNA glycosylase (230 aa).

Asp65 (proton acceptor) is an active-site residue.

The protein belongs to the uracil-DNA glycosylase (UDG) superfamily. UNG family.

Its subcellular location is the cytoplasm. The catalysed reaction is Hydrolyzes single-stranded DNA or mismatched double-stranded DNA and polynucleotides, releasing free uracil.. Excises uracil residues from the DNA which can arise as a result of misincorporation of dUMP residues by DNA polymerase or due to deamination of cytosine. In Pediococcus pentosaceus (strain ATCC 25745 / CCUG 21536 / LMG 10740 / 183-1w), this protein is Uracil-DNA glycosylase.